A 1162-amino-acid polypeptide reads, in one-letter code: MPKRTDIKSILIIGAGPIVIGQACEFDYSGTQACKALKEEGYRIILVNSNPATIMTDPDLADATYIEPITPEVVAKIIAKERPDAILPTMGGQTALNTALSLRRMGVLERYNVEMIGAKAEAIDKAEDRALFREAMKKIGLDTPGSMFANATEIKDEDRKRHEVKRAEVKAQFSGDELDKALDKLETEWQLGEVERKQRYMSHALAKAAQALDVVGLPAIIRPSFTLGGTGGGIAYNRQEFFEIIERGLDASPTTEVLIEESVLGWKEYEMEVVRDHADNCIIICSIENLDPMGVHTGDSITVAPALTLTDKEYQIMRNASIAVLREIGVETGGSNVQFAINPANGRMIVIEMNPRVSRSSALASKATGFPIAKVAAKLAVGYTLDELDNDITGGATPASFEPSIDYVVTKIPRFAFEKFPGSSPILTTAMKSVGEVMAIGRTFQESLQKALRGLETGLTGFDEIAIPNIEEGDEKNAIRAAIGTPTPDRLRMVAQAMRLGLSVEQVHDASKIDPWFLEQIESIVKTEERIREHGLPQDAENLRMLKAMGFSDARLASLTAKDAEDVAKLRADLDVHPVYKRIDTCAAEFASPTAYMYSTYETPFVGQPRSEAEVSDRKKVVILGGGPNRIGQGIEFDYCCCHAAFALGDADYEAIMVNCNPETVSTDYDTSDRLYFEPLTAEDVLEILRVEKQKGTLHGVIVQFGGQTPLKLANALEKAGIPILGTSPDAIDLAEDRDRFQKLLIKLDLNQPKNGIAYSVEQARLVAADLGFPLVVRPSYVLGGRAMQIIHDERGLQAYLLDTVPELVPEDIKAKYPNDKTGQINTLLGKNPLLFDTYLTEAIEVDVDCLCDGKDSLVAGIMEHIEEAGIHSGDSACLLPVHTLSPEIVAELERQTAALATALHVGGLMNVQFAIKDGEIFILEVNPRASRTVPFVAKTVGTPIAKVAARIMAGESLEAAFDAYGGKPQPTARPHIAVKEAVFPFARFPGVDTLLGPEMRSTGEVMGLDYDYALAFAKAQLGAGVELPREGTVFVSVRDEDKERVLGPVRKLASIGFKVMATGGTQKFLEANGVESTKINKVIEGRPHVEDAIRNRQIHLVFNTTDSASAVSDSKSIRRATLMQKLPYYTTMAGAESAAEAIAALKAGSLEVRPLQDYFRS.

Positions methionine 1–glutamate 456 are carboxyphosphate synthetic domain. Residues arginine 129, arginine 222, glycine 228, glycine 229, glutamate 261, valine 263, glutamate 268, glycine 294, valine 295, histidine 296, glutamine 338, and glutamate 352 each contribute to the ATP site. The region spanning glutamate 186–valine 381 is the ATP-grasp 1 domain. Glutamine 338, glutamate 352, and asparagine 354 together coordinate Mg(2+). Glutamine 338, glutamate 352, and asparagine 354 together coordinate Mn(2+). Residues threonine 457–alanine 613 are oligomerization domain. Residues glutamate 614–glycine 1025 form a carbamoyl phosphate synthetic domain region. The 213-residue stretch at glutamine 742–alanine 954 folds into the ATP-grasp 2 domain. 10 residues coordinate ATP: arginine 778, threonine 838, leucine 840, glutamate 845, glycine 870, isoleucine 871, histidine 872, serine 873, glutamine 913, and glutamate 925. Mg(2+)-binding residues include glutamine 913, glutamate 925, and asparagine 927. Residues glutamine 913, glutamate 925, and asparagine 927 each coordinate Mn(2+). Positions valine 1026 to serine 1162 constitute an MGS-like domain. The tract at residues valine 1026–serine 1162 is allosteric domain.

This sequence belongs to the CarB family. As to quaternary structure, composed of two chains; the small (or glutamine) chain promotes the hydrolysis of glutamine to ammonia, which is used by the large (or ammonia) chain to synthesize carbamoyl phosphate. Tetramer of heterodimers (alpha,beta)4. Requires Mg(2+) as cofactor. The cofactor is Mn(2+).

It catalyses the reaction hydrogencarbonate + L-glutamine + 2 ATP + H2O = carbamoyl phosphate + L-glutamate + 2 ADP + phosphate + 2 H(+). It carries out the reaction hydrogencarbonate + NH4(+) + 2 ATP = carbamoyl phosphate + 2 ADP + phosphate + 2 H(+). The protein operates within amino-acid biosynthesis; L-arginine biosynthesis; carbamoyl phosphate from bicarbonate: step 1/1. It functions in the pathway pyrimidine metabolism; UMP biosynthesis via de novo pathway; (S)-dihydroorotate from bicarbonate: step 1/3. Large subunit of the glutamine-dependent carbamoyl phosphate synthetase (CPSase). CPSase catalyzes the formation of carbamoyl phosphate from the ammonia moiety of glutamine, carbonate, and phosphate donated by ATP, constituting the first step of 2 biosynthetic pathways, one leading to arginine and/or urea and the other to pyrimidine nucleotides. The large subunit (synthetase) binds the substrates ammonia (free or transferred from glutamine from the small subunit), hydrogencarbonate and ATP and carries out an ATP-coupled ligase reaction, activating hydrogencarbonate by forming carboxy phosphate which reacts with ammonia to form carbamoyl phosphate. This is Carbamoyl phosphate synthase large chain from Brucella melitensis biotype 1 (strain ATCC 23456 / CCUG 17765 / NCTC 10094 / 16M).